Reading from the N-terminus, the 169-residue chain is S-ribosylhomocysteine lyase (169 aa).

H54, H58, and C128 together coordinate Fe cation.

The protein belongs to the LuxS family. In terms of assembly, homodimer. The cofactor is Fe cation.

The enzyme catalyses S-(5-deoxy-D-ribos-5-yl)-L-homocysteine = (S)-4,5-dihydroxypentane-2,3-dione + L-homocysteine. Functionally, involved in the synthesis of autoinducer 2 (AI-2) which is secreted by bacteria and is used to communicate both the cell density and the metabolic potential of the environment. The regulation of gene expression in response to changes in cell density is called quorum sensing. Catalyzes the transformation of S-ribosylhomocysteine (RHC) to homocysteine (HC) and 4,5-dihydroxy-2,3-pentadione (DPD). This Sulfurovum sp. (strain NBC37-1) protein is S-ribosylhomocysteine lyase.